The primary structure comprises 389 residues: Chalcone synthase 9 (389 aa).

Cys164 is a catalytic residue.

This sequence belongs to the thiolase-like superfamily. Chalcone/stilbene synthases family.

The catalysed reaction is (E)-4-coumaroyl-CoA + 3 malonyl-CoA + 3 H(+) = 2',4,4',6'-tetrahydroxychalcone + 3 CO2 + 4 CoA. Its pathway is secondary metabolite biosynthesis; flavonoid biosynthesis. Its function is as follows. The primary product of this enzyme is 4,2',4',6'-tetrahydroxychalcone (also termed naringenin-chalcone or chalcone) which can under specific conditions spontaneously isomerize into naringenin. The sequence is that of Chalcone synthase 9 (CHS9) from Medicago sativa (Alfalfa).